A 1049-amino-acid chain; its full sequence is Protein phosphatase 1 regulatory subunit 12A (1049 aa).

ANK repeat units lie at residues 39-68 (DDGA…DINY), 72-101 (DGLT…CINQ), 105-134 (EGWI…SVGV), 138-164 (EGET…RQGV), 198-227 (SGGT…DVNI), and 231-260 (DGWT…DMDV). The disordered stretch occupies residues 302–947 (LIETTTTGDN…RPYSRFEKDD (646 aa)). The span at 303–315 (IETTTTGDNNQSV) shows a compositional bias: polar residues. Residues 319-341 (KSKETLLLEPEKTAPRIETLEPE) show a composition bias toward basic and acidic residues. Residues 359 to 371 (SEEEEEEDSESEN) are compositionally biased toward acidic residues. The segment covering 378–421 (SSVPSSVSNSTPTTAPSSITVTSPTTPSNQVTTPTSPTKKVSTP) has biased composition (low complexity). The span at 426 to 436 (SPKEEDRKDES) shows a compositional bias: basic and acidic residues. The span at 473–484 (RSASSPRLSSSL) shows a compositional bias: low complexity. A compositionally biased stretch (basic and acidic residues) spans 485-497 (DNKDKEKEKEKTR). Over residues 545–564 (SDGTASTNRTSSYQRSTSHT) the composition is skewed to polar residues. The segment covering 571 to 592 (SSSRDLPAKSSSASSLEPNNSK) has biased composition (low complexity). The segment covering 593-607 (AWQPSSYYQSYSIHR) has biased composition (polar residues). A compositionally biased stretch (low complexity) spans 620–639 (SSTSSSTTTTTTTSSVTSPT). Residues 649–664 (WAEESAEKEKEKEKES) are compositionally biased toward basic and acidic residues. Over residues 665-686 (ATVIPTINTAGTTTTTSTTGTV) the composition is skewed to low complexity. Basic and acidic residues predominate over residues 702 to 711 (VRDEESESQR). Over residues 712 to 722 (KARSRQARQSR) the composition is skewed to basic residues. Basic and acidic residues predominate over residues 747–789 (RPREDEKEEKEKQDKEKQEEKKETETKEDDYRSRYRSFEEKYR). The segment covering 790 to 819 (TSLASSTTASSTIPSSSSSSSSSLYSTSSL) has biased composition (low complexity). The segment covering 820-829 (NRPNSLTGLT) has biased composition (polar residues). Residues 835-863 (STRDTDRESDRKEKDEDRDGDDKSQPRSI) show a composition bias toward basic and acidic residues. The span at 864–875 (RDRRRPREKRRS) shows a compositional bias: basic residues. Basic and acidic residues-rich tracts occupy residues 890-906 (PDHP…EPQS) and 934-947 (GESR…EKDD).

PP1 comprises a catalytic subunit, and one or several targeting or regulatory subunits. Ppp1r12a mediates binding to myosin.

The protein localises to the cytoplasm. Functionally, regulates myosin phosphatase activity. The chain is Protein phosphatase 1 regulatory subunit 12A (ppp1r12a) from Danio rerio (Zebrafish).